Consider the following 193-residue polypeptide: Ion-translocating oxidoreductase complex subunit A (193 aa).

6 consecutive transmembrane segments (helical) span residues 4 to 24 (FFFI…KFLG), 39 to 59 (IGMG…SWMV), 71 to 91 (FLRI…IEVV), 102 to 122 (ALGI…VALL), 134 to 154 (LLYG…FAGM), and 167 to 187 (FAGA…FMGF).

The protein belongs to the NqrDE/RnfAE family. In terms of assembly, the complex is composed of six subunits: RnfA, RnfB, RnfC, RnfD, RnfE and RnfG.

It is found in the cellular chromatophore membrane. In terms of biological role, part of a membrane-bound complex that couples electron transfer with translocation of ions across the membrane. The polypeptide is Ion-translocating oxidoreductase complex subunit A (Cereibacter sphaeroides (strain ATCC 17029 / ATH 2.4.9) (Rhodobacter sphaeroides)).